We begin with the raw amino-acid sequence, 473 residues long: tRNA modification GTPase MnmE (473 aa).

The (6S)-5-formyl-5,6,7,8-tetrahydrofolate site is built by arginine 31, glutamate 95, and arginine 134. The 165-residue stretch at 230–394 (GVSTVIAGKP…LKQHMGDLVK (165 aa)) folds into the TrmE-type G domain. Residues 240-245 (NAGKST), 259-265 (SHMPGTT), and 284-287 (DTAG) each bind GTP. Serine 244 and threonine 265 together coordinate Mg(2+). Lysine 473 serves as a coordination point for (6S)-5-formyl-5,6,7,8-tetrahydrofolate.

It belongs to the TRAFAC class TrmE-Era-EngA-EngB-Septin-like GTPase superfamily. TrmE GTPase family. In terms of assembly, homodimer. Heterotetramer of two MnmE and two MnmG subunits. K(+) serves as cofactor.

It is found in the cytoplasm. Functionally, exhibits a very high intrinsic GTPase hydrolysis rate. Involved in the addition of a carboxymethylaminomethyl (cmnm) group at the wobble position (U34) of certain tRNAs, forming tRNA-cmnm(5)s(2)U34. This is tRNA modification GTPase MnmE from Chlorobaculum tepidum (strain ATCC 49652 / DSM 12025 / NBRC 103806 / TLS) (Chlorobium tepidum).